The sequence spans 3412 residues: Genome polyprotein (3412 aa).

The tract at residues 2–15 (SKKPGKPGRNRVVN) is interaction with host EXOC1. Residues 2 to 108 (SKKPGKPGRN…PSKKRGGTRS (107 aa)) are Cytoplasmic-facing. The interval 37-72 (LLDGRGPVRFILAILTFFRFTALQPTEALKRRWRAV) is hydrophobic; homodimerization of capsid protein C. The propeptide at 104-121 (GGTRSLLGLAALIGLASS) is ER anchor for the capsid protein C, removed in mature form by serine protease NS3. A helical membrane pass occupies residues 109–129 (LLGLAALIGLASSLQLSTYQG). Residues 130-247 (KVLMSINKTD…TTKYLTKVEN (118 aa)) are Extracellular-facing. Asparagine 136 carries an N-linked (GlcNAc...) asparagine; by host glycan. A helical transmembrane segment spans residues 248-268 (WVLRNPGYALVALAIGWMLGS). Residues 269–273 (NNTQR) are Cytoplasmic-facing. Residues 274–288 (VVFVIMLMLIAPAYS) traverse the membrane as a helical segment. Residues 289–741 (FNCLGTSNRD…QVFGGAFRTL (453 aa)) are Extracellular-facing. Intrachain disulfides connect cysteine 291–cysteine 318, cysteine 348–cysteine 404, cysteine 348–cysteine 409, cysteine 362–cysteine 393, cysteine 380–cysteine 404, cysteine 380–cysteine 409, cysteine 478–cysteine 576, and cysteine 593–cysteine 624. The tract at residues 386 to 399 (DRGWGNGCGLFGKG) is fusion peptide. A helical membrane pass occupies residues 742-762 (FGGMSWITQGLLGALLLWMGL). Topologically, residues 763-768 (QARDRS) are cytoplasmic. Residues 769–789 (ISLTLLAVGGILIFLATSVQA) traverse the membrane as a helical segment. Topologically, residues 790–1214 (DSGCAIDLQR…AFAEMNTGGD (425 aa)) are extracellular. Intrachain disulfides connect cysteine 793–cysteine 804 and cysteine 844–cysteine 932. Residues asparagine 919, asparagine 964, and asparagine 996 are each glycosylated (N-linked (GlcNAc...) asparagine; by host). 6 cysteine pairs are disulfide-bonded: cysteine 968/cysteine 1012, cysteine 1069/cysteine 1118, cysteine 1080/cysteine 1101, cysteine 1080/cysteine 1102, cysteine 1101/cysteine 1105, and cysteine 1102/cysteine 1105. The chain crosses the membrane as a helical span at residues 1215–1235 (VIHLALVAVFKVQPAFLAGLF). At 1236 to 1245 (LRMQWSNQEN) the chain is on the cytoplasmic side. Residues 1246–1266 (ILMVIGAAFLQMAANDLKLEV) form a helical membrane-spanning segment. The Lumenal portion of the chain corresponds to 1267 to 1288 (LPILNAMSIAWMLIRAMKEGKV). A helical membrane pass occupies residues 1289–1303 (AMYALPILCALTPGM). A topological domain (cytoplasmic) is located at residue arginine 1304. A helical transmembrane segment spans residues 1305–1325 (MAGLDVIRCLLLIIGIVTLLN). Over 1326 to 1339 (ERRESVAKKKGGYL) the chain is Lumenal. Residues 1340-1360 (LAAALCQAGVCSPLIMMGGLI) traverse the membrane as a helical segment. Topologically, residues 1361-1369 (LAHPNGKRS) are cytoplasmic. The helical transmembrane segment at 1370–1390 (WPASEVLTGVGLMCALAGGLL) threads the bilayer. Residues 1391–1393 (EFE) lie on the Lumenal side of the membrane. Residues 1394 to 1414 (ETSMVVPFAIAGLMYITYTVS) traverse the membrane as a helical segment. Over 1415–1471 (GKAAEMWIEKAADITWEQNAEITGTSPRLDVDLDSHGNFKLLNDPGAPVHLFALRFI) the chain is Cytoplasmic. The interacts with and activates NS3 protease stretch occupies residues 1422–1461 (IEKAADITWEQNAEITGTSPRLDVDLDSHGNFKLLNDPGA). The helical intramembrane region spans 1472 to 1492 (LLGLSARFHWFIPFGVLGFWL). At 1493-2167 (LGKHSKRGGA…KEALAELPDS (675 aa)) the chain is on the cytoplasmic side. In terms of domain architecture, Peptidase S7 spans 1500–1677 (GGALWDVPSP…ERTEEPIPDA (178 aa)). Active-site charge relay system; for serine protease NS3 activity residues include histidine 1550, aspartate 1574, and serine 1634. The Helicase ATP-binding domain occupies 1680–1836 (EEMLRKRKLT…DSNSPILDVE (157 aa)). The interval 1684-1687 (RKRK) is important for RNA-binding. 1693–1700 (LHPGAGKT) serves as a coordination point for ATP. Positions 1784–1787 (DEAH) match the DEAH box motif. The Helicase C-terminal domain occupies 1847–2011 (GYEWITNFTG…GLVAQMYQPE (165 aa)). The regulates the ATPase activity of NS3 helicase stretch occupies residues 2162-2166 (AELPD). The chain crosses the membrane as a helical span at residues 2168–2188 (LETLLLIGMLCVMSMGTFIFL). Topologically, residues 2189 to 2193 (MNRKG) are lumenal. The segment at residues 2194–2214 (VGKMGLGAFVMTLATALLWAA) is an intramembrane region (helical). Residue glutamate 2215 is a topological domain, lumenal. The chain crosses the membrane as a helical span at residues 2216–2236 (VPGTQIAGVLLIVFLLMIVLI). At 2237–2251 (PEPEKQRSQTDNQLA) the chain is on the cytoplasmic side. Residues 2252–2266 (VFLICIMTLMGVVAA) traverse the membrane as a helical segment. Residues 2267–2308 (NEMGLLEKTKSDIAKLFGSQPGSVGFATRTTPWDISLDIKPA) are Lumenal-facing. The segment at residues 2309 to 2329 (TAWALYAAATMVMTPLIKHLI) is an intramembrane region (helical). At 2330 to 2376 (TTQYVNFSLTAIASQAGVLLGLTNGMPFTAMDLSVPLLVLGCWNQMT) the chain is on the lumenal side. Residues 2377-2397 (LPSLAVAVMLLAIHYAFMIPG) traverse the membrane as a helical segment. Topologically, residues 2398-2440 (WQAEAMRAAQRRTAAGIMKNAVVDGIVATDIPDLSPATPMTEK) are cytoplasmic. A helical transmembrane segment spans residues 2441–2461 (KMGQILLIAAAVLAVLVRPGI). At 2462–2466 (CSIKE) the chain is on the lumenal side. Residues 2467 to 2487 (FGVLGSAALVTLIEGTAGVVW) form a helical membrane-spanning segment. The Cytoplasmic segment spans residues 2488–3412 (NCTTAVGLCN…IGEEEYRDYM (925 aa)). In terms of domain architecture, mRNA cap 0-1 NS5-type MT spans 2525 to 2790 (GGGKGATLGE…DVNLGSGTRS (266 aa)). Serine 2580 contacts S-adenosyl-L-methionine. Serine 2580 is subject to Phosphoserine. The active-site For 2'-O-MTase activity is the lysine 2585. The S-adenosyl-L-methionine site is built by glycine 2610, tryptophan 2611, threonine 2628, lysine 2629, aspartate 2655, and valine 2656. Catalysis depends on aspartate 2670, which acts as the For 2'-O-MTase activity. Isoleucine 2671 is a binding site for S-adenosyl-L-methionine. Residues lysine 2706 and glutamate 2742 each act as for 2'-O-MTase activity in the active site. Tyrosine 2744 is a binding site for S-adenosyl-L-methionine. Positions 2771 to 2780 (QNRSGPRYEE) are enriched in basic and acidic residues. The interval 2771 to 2791 (QNRSGPRYEEDVNLGSGTRSV) is disordered. Residues glutamate 2964, histidine 2968, cysteine 2973, and cysteine 2976 each coordinate Zn(2+). The RdRp catalytic domain maps to 3054–3206 (GKMYADDTAG…KPIDDRFATA (153 aa)). Zn(2+)-binding residues include histidine 3241, cysteine 3257, and cysteine 3376.

It in the N-terminal section; belongs to the class I-like SAM-binding methyltransferase superfamily. mRNA cap 0-1 NS5-type methyltransferase family. As to quaternary structure, homodimer. Interacts (via N-terminus) with host EXOC1 (via C-terminus); this interaction results in EXOC1 degradation through the proteasome degradation pathway. In terms of assembly, forms heterodimers with envelope protein E in the endoplasmic reticulum and Golgi. Homodimer; in the endoplasmic reticulum and Golgi. Interacts with protein prM. Interacts with non-structural protein 1. As to quaternary structure, homodimer; Homohexamer when secreted. Interacts with envelope protein E. NS1 interacts with NS4B. Interacts with host complement protein CFH; this interaction leads to the degradation of C3. In terms of assembly, interacts (via N-terminus) with serine protease NS3. Forms a heterodimer with serine protease NS3. May form homooligomers. As to quaternary structure, forms a heterodimer with NS2B. Interacts with non-structural protein 2A (via N-terminus). Interacts with NS4B. Interacts with unphosphorylated RNA-directed RNA polymerase NS5; this interaction stimulates RNA-directed RNA polymerase NS5 guanylyltransferase activity. In terms of assembly, interacts with serine protease NS3. Homodimer. Interacts with host STAT2; this interaction inhibits the phosphorylation of the latter, and, when all viral proteins are present (polyprotein), targets STAT2 for degradation. Interacts with serine protease NS3. Post-translationally, specific enzymatic cleavages in vivo yield mature proteins. Cleavages in the lumen of endoplasmic reticulum are performed by host signal peptidase, whereas cleavages in the cytoplasmic side are performed by serine protease NS3. Signal cleavage at the 2K-4B site requires a prior NS3 protease-mediated cleavage at the 4A-2K site. Cleaved in post-Golgi vesicles by a host furin, releasing the mature small envelope protein M, and peptide pr. This cleavage is incomplete as up to 30% of viral particles still carry uncleaved prM. In terms of processing, N-glycosylated. Post-translationally, N-glycosylated. The excreted form is glycosylated and this is required for efficient secretion of the protein from infected cells. Phosphorylated on serines residues. This phosphorylation may trigger NS5 nuclear localization.

Its subcellular location is the virion. The protein localises to the host nucleus. It is found in the host cytoplasm. The protein resides in the host perinuclear region. It localises to the secreted. Its subcellular location is the virion membrane. The protein localises to the host endoplasmic reticulum membrane. The enzyme catalyses Selective hydrolysis of -Xaa-Xaa-|-Yaa- bonds in which each of the Xaa can be either Arg or Lys and Yaa can be either Ser or Ala.. It catalyses the reaction RNA(n) + a ribonucleoside 5'-triphosphate = RNA(n+1) + diphosphate. The catalysed reaction is a ribonucleoside 5'-triphosphate + H2O = a ribonucleoside 5'-diphosphate + phosphate + H(+). It carries out the reaction ATP + H2O = ADP + phosphate + H(+). The enzyme catalyses a 5'-end (5'-triphosphoguanosine)-ribonucleoside in mRNA + S-adenosyl-L-methionine = a 5'-end (N(7)-methyl 5'-triphosphoguanosine)-ribonucleoside in mRNA + S-adenosyl-L-homocysteine. It catalyses the reaction a 5'-end (N(7)-methyl 5'-triphosphoguanosine)-ribonucleoside in mRNA + S-adenosyl-L-methionine = a 5'-end (N(7)-methyl 5'-triphosphoguanosine)-(2'-O-methyl-ribonucleoside) in mRNA + S-adenosyl-L-homocysteine + H(+). In terms of biological role, plays a role in virus budding by binding to the cell membrane and gathering the viral RNA into a nucleocapsid that forms the core of a mature virus particle. During virus entry, may induce genome penetration into the host cytoplasm after hemifusion induced by the surface proteins. Can migrate to the cell nucleus where it modulates host functions. Overcomes the anti-viral effects of host EXOC1 by sequestering and degrading the latter through the proteasome degradation pathway. Inhibits RNA silencing by interfering with host Dicer. Functionally, prevents premature fusion activity of envelope proteins in trans-Golgi by binding to envelope protein E at pH6.0. After virion release in extracellular space, gets dissociated from E dimers. Its function is as follows. Acts as a chaperone for envelope protein E during intracellular virion assembly by masking and inactivating envelope protein E fusion peptide. prM is the only viral peptide matured by host furin in the trans-Golgi network probably to avoid catastrophic activation of the viral fusion activity in acidic Golgi compartment prior to virion release. prM-E cleavage is inefficient, and many virions are only partially matured. These uncleaved prM would play a role in immune evasion. In terms of biological role, may play a role in virus budding. Exerts cytotoxic effects by activating a mitochondrial apoptotic pathway through M ectodomain. May display a viroporin activity. Binds to host cell surface receptor and mediates fusion between viral and cellular membranes. Envelope protein is synthesized in the endoplasmic reticulum in the form of heterodimer with protein prM. They play a role in virion budding in the ER, and the newly formed immature particle is covered with 60 spikes composed of heterodimer between precursor prM and envelope protein E. The virion is transported to the Golgi apparatus where the low pH causes dissociation of PrM-E heterodimers and formation of E homodimers. prM-E cleavage is inefficient, and many virions are only partially matured. These uncleaved prM would play a role in immune evasion. Functionally, involved in immune evasion, pathogenesis and viral replication. Once cleaved off the polyprotein, is targeted to three destinations: the viral replication cycle, the plasma membrane and the extracellular compartment. Essential for viral replication. Required for formation of the replication complex and recruitment of other non-structural proteins to the ER-derived membrane structures. Excreted as a hexameric lipoparticle that plays a role against host immune response. Antagonizing the complement function. Binds to the host macrophages and dendritic cells. Inhibits signal transduction originating from Toll-like receptor 3 (TLR3). Its function is as follows. Component of the viral RNA replication complex that functions in virion assembly and antagonizes the host alpha/beta interferon antiviral response. In terms of biological role, required cofactor for the serine protease function of NS3. May have membrane-destabilizing activity and form viroporins. Displays three enzymatic activities: serine protease, NTPase and RNA helicase. NS3 serine protease, in association with NS2B, performs its autocleavage and cleaves the polyprotein at dibasic sites in the cytoplasm: C-prM, NS2A-NS2B, NS2B-NS3, NS3-NS4A, NS4A-2K and NS4B-NS5. NS3 RNA helicase binds RNA and unwinds dsRNA in the 3' to 5' direction. Functionally, regulates the ATPase activity of the NS3 helicase activity. NS4A allows NS3 helicase to conserve energy during unwinding. Its function is as follows. Functions as a signal peptide for NS4B and is required for the interferon antagonism activity of the latter. In terms of biological role, induces the formation of ER-derived membrane vesicles where the viral replication takes place. Inhibits interferon (IFN)-induced host STAT1 phosphorylation and nuclear translocation, thereby preventing the establishment of cellular antiviral state by blocking the IFN-alpha/beta pathway. Inhibits STAT2 translocation in the nucleus after IFN-alpha treatment. Replicates the viral (+) and (-) RNA genome, and performs the capping of genomes in the cytoplasm. NS5 methylates viral RNA cap at guanine N-7 and ribose 2'-O positions. Besides its role in RNA genome replication, also prevents the establishment of cellular antiviral state by blocking the interferon-alpha/beta (IFN-alpha/beta) signaling pathway. Inhibits host TYK2 and STAT2 phosphorylation, thereby preventing activation of JAK-STAT signaling pathway. In Agelaius tricolor (Tricolored blackbird), this protein is Genome polyprotein.